We begin with the raw amino-acid sequence, 356 residues long: Protein-glutamate methylesterase/protein-glutamine glutaminase 2 (356 aa).

The 118-residue stretch at 6-123 (KVLIVDDSAL…KQFLEESSIR (118 aa)) folds into the Response regulatory domain. Asp57 carries the 4-aspartylphosphate modification. In terms of domain architecture, CheB-type methylesterase spans 165–356 (VQRTEKVVVV…AAAIVKACNS (192 aa)). Active-site residues include Ser177, His203, and Asp299.

It belongs to the CheB family. Post-translationally, phosphorylated by CheA. Phosphorylation of the N-terminal regulatory domain activates the methylesterase activity.

The protein resides in the cytoplasm. The enzyme catalyses [protein]-L-glutamate 5-O-methyl ester + H2O = L-glutamyl-[protein] + methanol + H(+). The catalysed reaction is L-glutaminyl-[protein] + H2O = L-glutamyl-[protein] + NH4(+). Functionally, involved in chemotaxis. Part of a chemotaxis signal transduction system that modulates chemotaxis in response to various stimuli. Catalyzes the demethylation of specific methylglutamate residues introduced into the chemoreceptors (methyl-accepting chemotaxis proteins or MCP) by CheR. Also mediates the irreversible deamidation of specific glutamine residues to glutamic acid. In Oleidesulfovibrio alaskensis (strain ATCC BAA-1058 / DSM 17464 / G20) (Desulfovibrio alaskensis), this protein is Protein-glutamate methylesterase/protein-glutamine glutaminase 2.